Consider the following 893-residue polypeptide: Protein bride of sevenless (893 aa).

Positions 1–30 are cleaved as a signal peptide; that stretch reads MSGLQLIWKSPTQLVLFVLLITISCIDLCH. Residues 32–530 are Extracellular-facing; it reads VGAATPTKKS…RIKLDTWVAT (499 aa). Disordered stretches follow at residues 36–66 and 82–102; these read TPTKKSPPVRITKPQPVSSTTTAIPTTNEGS and GTASSASSSSNGGSDDSSSTT. Residues 50–66 show a composition bias toward polar residues; the sequence is QPVSSTTTAIPTTNEGS. Residues Asn-183, Asn-307, Asn-328, Asn-471, and Asn-482 are each glycosylated (N-linked (GlcNAc...) asparagine). 8 helical membrane passes run 531–551, 563–583, 607–627, 630–650, 653–673, 692–712, 722–742, and 752–772; these read GLTAAILGLIATLAILVFIVV, PVTSILLLLSLILVFCSFVPF, LCGVRVFIMTLVYCFVFSLLL, AVMLASIGSEGGFLSHVNGYI, IICVLSVFVQVGMSVQLLVVM, WGLLAYDFLLLCSLVSLVPFI, GILIVIGAVLILIIWSVWIAL, and AAIPLGMQASGWAVLVGILIP. Topologically, residues 773-893 are cytoplasmic; it reads RTFLIVRGIE…SPDHSKITRF (121 aa). The segment at 858–893 is disordered; sequence ANINPQRPPPHPQQSPSRSSVCSLPPSPDHSKITRF.

The protein belongs to the G-protein coupled receptor 3 family.

The protein localises to the cell membrane. Its function is as follows. Acts as a ligand for sevenless tyrosine-kinase receptor during eye development. The sequence is that of Protein bride of sevenless (boss) from Drosophila virilis (Fruit fly).